The following is a 301-amino-acid chain: NADH-cytochrome b5 reductase 3 (301 aa).

A lipid anchor (N-myristoyl glycine) is attached at glycine 2. Positions 40–152 constitute an FAD-binding FR-type domain; that stretch reads DIKYSLRLID…RGPNGLLVYQ (113 aa). The residue at position 42 (lysine 42) is an N6-acetyllysine. Tyrosine 43 bears the Phosphotyrosine mark. FAD-binding residues include arginine 92, proline 93, tyrosine 94, valine 109, lysine 111, and phenylalanine 114. Lysine 120 is subject to N6-acetyllysine. The FAD site is built by lysine 126, methionine 127, serine 128, and threonine 185.

This sequence belongs to the flavoprotein pyridine nucleotide cytochrome reductase family. As to quaternary structure, component of a complex composed of cytochrome b5, NADH-cytochrome b5 reductase (CYB5R3) and MTARC2. Interacts with MTLN; the interaction is required to maintain cellular lipid composition and leads to stimulation of mitochondrial respiratory complex I activity. The cofactor is FAD.

Its subcellular location is the endoplasmic reticulum membrane. It localises to the mitochondrion outer membrane. The enzyme catalyses 2 Fe(III)-[cytochrome b5] + NADH = 2 Fe(II)-[cytochrome b5] + NAD(+) + H(+). Its function is as follows. Catalyzes the reduction of two molecules of cytochrome b5 using NADH as the electron donor. The protein is NADH-cytochrome b5 reductase 3 (CYB5R3) of Macaca fascicularis (Crab-eating macaque).